The sequence spans 514 residues: Cobyric acid synthase (514 aa).

A GATase cobBQ-type domain is found at Leu249–Ile448. The active-site Nucleophile is the Cys330. His440 is a catalytic residue.

The protein belongs to the CobB/CobQ family. CobQ subfamily.

Its pathway is cofactor biosynthesis; adenosylcobalamin biosynthesis. Catalyzes amidations at positions B, D, E, and G on adenosylcobyrinic A,C-diamide. NH(2) groups are provided by glutamine, and one molecule of ATP is hydrogenolyzed for each amidation. This Ruminiclostridium cellulolyticum (strain ATCC 35319 / DSM 5812 / JCM 6584 / H10) (Clostridium cellulolyticum) protein is Cobyric acid synthase.